The primary structure comprises 309 residues: UDP-3-O-acyl-N-acetylglucosamine deacetylase (309 aa).

His-78, His-237, and Asp-241 together coordinate Zn(2+). The Proton donor role is filled by His-264.

The protein belongs to the LpxC family. Requires Zn(2+) as cofactor.

The catalysed reaction is a UDP-3-O-[(3R)-3-hydroxyacyl]-N-acetyl-alpha-D-glucosamine + H2O = a UDP-3-O-[(3R)-3-hydroxyacyl]-alpha-D-glucosamine + acetate. Its pathway is glycolipid biosynthesis; lipid IV(A) biosynthesis; lipid IV(A) from (3R)-3-hydroxytetradecanoyl-[acyl-carrier-protein] and UDP-N-acetyl-alpha-D-glucosamine: step 2/6. Its function is as follows. Catalyzes the hydrolysis of UDP-3-O-myristoyl-N-acetylglucosamine to form UDP-3-O-myristoylglucosamine and acetate, the committed step in lipid A biosynthesis. The polypeptide is UDP-3-O-acyl-N-acetylglucosamine deacetylase (Methylobacillus flagellatus (strain ATCC 51484 / DSM 6875 / VKM B-1610 / KT)).